Here is a 513-residue protein sequence, read N- to C-terminus: ATP synthase subunit alpha (513 aa).

169–176 (GDRQTGKT) contributes to the ATP binding site.

It belongs to the ATPase alpha/beta chains family. As to quaternary structure, F-type ATPases have 2 components, CF(1) - the catalytic core - and CF(0) - the membrane proton channel. CF(1) has five subunits: alpha(3), beta(3), gamma(1), delta(1), epsilon(1). CF(0) has three main subunits: a(1), b(2) and c(9-12). The alpha and beta chains form an alternating ring which encloses part of the gamma chain. CF(1) is attached to CF(0) by a central stalk formed by the gamma and epsilon chains, while a peripheral stalk is formed by the delta and b chains.

It is found in the cell inner membrane. It carries out the reaction ATP + H2O + 4 H(+)(in) = ADP + phosphate + 5 H(+)(out). Functionally, produces ATP from ADP in the presence of a proton gradient across the membrane. The alpha chain is a regulatory subunit. This chain is ATP synthase subunit alpha, found in Klebsiella pneumoniae subsp. pneumoniae (strain ATCC 700721 / MGH 78578).